We begin with the raw amino-acid sequence, 99 residues long: Integration host factor subunit alpha (99 aa).

The tract at residues 49–70 (FGNFDLRDKNQRPGRNPKTGED) is disordered.

The protein belongs to the bacterial histone-like protein family. In terms of assembly, heterodimer of an alpha and a beta chain.

Its function is as follows. This protein is one of the two subunits of integration host factor, a specific DNA-binding protein that functions in genetic recombination as well as in transcriptional and translational control. The polypeptide is Integration host factor subunit alpha (Cronobacter sakazakii (strain ATCC BAA-894) (Enterobacter sakazakii)).